A 266-amino-acid polypeptide reads, in one-letter code: Glutamate racemase (266 aa).

Substrate-binding positions include 9–10 (DS) and 41–42 (YG). The Proton donor/acceptor role is filled by Cys72. 73–74 (NT) contacts substrate. The active-site Proton donor/acceptor is the Cys184. Residue 185 to 186 (TH) coordinates substrate.

It belongs to the aspartate/glutamate racemases family.

The catalysed reaction is L-glutamate = D-glutamate. It functions in the pathway cell wall biogenesis; peptidoglycan biosynthesis. Provides the (R)-glutamate required for cell wall biosynthesis. The chain is Glutamate racemase from Staphylococcus aureus (strain Mu3 / ATCC 700698).